A 285-amino-acid polypeptide reads, in one-letter code: MVNILKKRAFGGAILAALLLASSAYVGAQSAPAAGAQGKTELLWFGQAGFRIKTPQGKMILIDPWITGGPKTPPMYKNDLAAIGPIDLLLVTHAHVDHLGDAPTIAKTNNTKLYGPADMVTPLTTLGVLPAELGYRFNKTGQVTPLPGIKVTAVQAEHSSLLVWKNPATDKLESHPAGEPMGYIIELENGFKIWHMGDTGLFSDMKFISEHYKPDLVLIPIGGNFTMAPDDAAYALRTWVKPKMVIPMHYNSNPMTKGTLAEFQAAMKGSNIKVIPMTEGETVQF.

Belongs to the UPF0173 family.

This Polynucleobacter asymbioticus (strain DSM 18221 / CIP 109841 / QLW-P1DMWA-1) (Polynucleobacter necessarius subsp. asymbioticus) protein is UPF0173 metal-dependent hydrolase Pnuc_1524.